We begin with the raw amino-acid sequence, 89 residues long: HssA/B-like protein 15 (89 aa).

The protein belongs to the hssA/B family.

In Dictyostelium discoideum (Social amoeba), this protein is HssA/B-like protein 15 (hssl15).